A 159-amino-acid polypeptide reads, in one-letter code: NADH-quinone oxidoreductase subunit I (159 aa).

2 4Fe-4S ferredoxin-type domains span residues 51-80 (RRYE…IEAD) and 90-119 (TRYD…EGPN). Residues Cys60, Cys63, Cys66, Cys70, Cys99, Cys102, Cys105, and Cys109 each contribute to the [4Fe-4S] cluster site.

It belongs to the complex I 23 kDa subunit family. NDH-1 is composed of 14 different subunits. Subunits NuoA, H, J, K, L, M, N constitute the membrane sector of the complex. [4Fe-4S] cluster serves as cofactor.

Its subcellular location is the cell inner membrane. The catalysed reaction is a quinone + NADH + 5 H(+)(in) = a quinol + NAD(+) + 4 H(+)(out). In terms of biological role, NDH-1 shuttles electrons from NADH, via FMN and iron-sulfur (Fe-S) centers, to quinones in the respiratory chain. The immediate electron acceptor for the enzyme in this species is believed to be ubiquinone. Couples the redox reaction to proton translocation (for every two electrons transferred, four hydrogen ions are translocated across the cytoplasmic membrane), and thus conserves the redox energy in a proton gradient. In Rickettsia felis (strain ATCC VR-1525 / URRWXCal2) (Rickettsia azadi), this protein is NADH-quinone oxidoreductase subunit I.